The primary structure comprises 329 residues: Phenylalanine--tRNA ligase alpha subunit (329 aa).

E254 contributes to the Mg(2+) binding site.

This sequence belongs to the class-II aminoacyl-tRNA synthetase family. Phe-tRNA synthetase alpha subunit type 1 subfamily. As to quaternary structure, tetramer of two alpha and two beta subunits. The cofactor is Mg(2+).

Its subcellular location is the cytoplasm. It catalyses the reaction tRNA(Phe) + L-phenylalanine + ATP = L-phenylalanyl-tRNA(Phe) + AMP + diphosphate + H(+). The sequence is that of Phenylalanine--tRNA ligase alpha subunit (pheS) from Haemophilus influenzae (strain ATCC 51907 / DSM 11121 / KW20 / Rd).